The chain runs to 300 residues: Sporulation protein SPS18 (300 aa).

Positions 11–130 (ENRKRLLRAK…LANEVRSNDI (120 aa)) constitute an Arf-GAP domain. The C4-type zinc-finger motif lies at 28–51 (CFECKSVNPQFVSCSFGIFICVNC).

This is Sporulation protein SPS18 (SPS18) from Saccharomyces cerevisiae (strain ATCC 204508 / S288c) (Baker's yeast).